Consider the following 263-residue polypeptide: uncharacterized protein (263 aa).

It to B.subtilis soj.

This is an uncharacterized protein from Pseudomonas putida (strain ATCC 47054 / DSM 6125 / CFBP 8728 / NCIMB 11950 / KT2440).